A 926-amino-acid chain; its full sequence is G-protein coupled receptor family C group 6 member A (926 aa).

The first 18 residues, 1 to 18 (MAFLIILITCFVIILATS), serve as a signal peptide directing secretion. Over 19-594 (QPCQTPDDFV…EYLNWNDSLA (576 aa)) the chain is Extracellular. N-linked (GlcNAc...) asparagine glycosylation is found at Asn121, Asn259, Asn332, Asn378, Asn452, Asn555, Asn567, and Asn590. The chain crosses the membrane as a helical span at residues 595 to 615 (ILLLILSLLGIIFVLVVGIIF). Residues 616–631 (TRNLNTPVVKSSGGLR) are Cytoplasmic-facing. The chain crosses the membrane as a helical span at residues 632 to 652 (VCYVILLCHFLNFASTSFFIG). Over 653–669 (EPQDFTCKTRQTMFGVS) the chain is Extracellular. The helical transmembrane segment at 670-690 (FTLCISCILTKSLKILLAFSF) threads the bilayer. The Cytoplasmic portion of the chain corresponds to 691-704 (DPKLQKFLKCLYRP). The helical transmembrane segment at 705 to 725 (ILIIFTCTGIQVVICTLWLIF) threads the bilayer. Topologically, residues 726–748 (AAPTVEVNVSLPRVIILECEEGS) are extracellular. Residue Asn733 is glycosylated (N-linked (GlcNAc...) asparagine). A helical membrane pass occupies residues 749 to 769 (ILAFGTMLGYIAILAFICFIF). The Cytoplasmic portion of the chain corresponds to 770–782 (AFKGKYENYNEAK). The chain crosses the membrane as a helical span at residues 783–803 (FITFGMLIYFIAWITFIPIYA). Residues 804 to 810 (TTFGKYV) are Extracellular-facing. A helical membrane pass occupies residues 811-831 (PAVEIIVILISNYGILYCTFI). Residues 832–926 (PKCYVIICKQ…TLPRKRMSSI (95 aa)) are Cytoplasmic-facing.

It belongs to the G-protein coupled receptor 3 family. In terms of assembly, homodimer; disulfide-linked. Isoform 1 is expressed at high level in brain, skeletal muscle, testis, bone, calvaria, osteoblasts and leukocytes. Expressed at intermediate level in liver, heart, kidney and spleen. Expressed at low level in lung, pancreas, placenta and ovary. Not detected in thymus, prostate, small intestine, tongue and colon. Isoform 1 and isoform 2 are expressed in kidney at the same level. Isoform 2 is expressed at lower level than isoform 1 in the other tissues.

Its subcellular location is the cell membrane. Its function is as follows. Receptor activated by multiple ligands, including osteocalcin (BGLAP), basic amino acids, and various cations. Activated by amino acids with a preference for basic amino acids such as L-Lys, L-Arg and L-ornithine but also by small and polar amino acids. The L-alpha amino acids respond is augmented by divalent cations Ca(2+) and Mg(2+). Seems to act through a G(q)/G(11) and G(i)-coupled pathway. Regulates testosterone production by acting as a ligand for uncarboxylated osteocalcin hormone: osteocalcin-binding at the surface of Leydig cells initiates a signaling response that promotes the expression of enzymes required for testosterone synthesis in a CREB-dependent manner. Mediates the non-genomic effects of androgens in multiple tissue. May coordinate nutritional and hormonal anabolic signals through the sensing of extracellular amino acids, osteocalcin, divalent ions and its responsiveness to anabolic steroids. This is G-protein coupled receptor family C group 6 member A (GPRC6A) from Homo sapiens (Human).